The chain runs to 785 residues: Ubiquitin carboxyl-terminal hydrolase 1 (785 aa).

Disordered regions lie at residues Met1–Asn21 and Thr33–Tyr52. A compositionally biased stretch (polar residues) spans Ser7–Ser16. Phosphoserine occurs at positions 16, 42, and 67. The USP domain maps to Val81–Leu785. The active-site Nucleophile is Cys90. Basic and acidic residues-rich tracts occupy residues Glu258 to Thr275 and Leu286 to Arg298. Positions Glu258–Arg336 are disordered. 2 positions are modified to phosphoserine: Ser313 and Ser475. His593 serves as the catalytic Proton acceptor. The disordered stretch occupies residues Thr693–Gly723. Over residues Gly708–Ser719 the composition is skewed to basic and acidic residues. The residue at position 768 (Ser768) is a Phosphoserine.

It belongs to the peptidase C19 family. In terms of assembly, interacts with FANCD2 and PCNA. Interacts with WDR48. Interacts with ATAD5; the interaction regulates USP1-mediated PCNA deubiquitination. Post-translationally, autocatalytic cleavage of USP1 following UV irradiation inactivates it, leading to an increase in ubiquitinated PCNA, recruitment of POLH and translesion synthesis. In terms of processing, ubiquitinated by the CRL2(KLHDC2) complex following autocatalytic cleavage, leading to its degradation: the CRL2(KLHDC2) complex recognizes the diglycine (Gly-Gly) at the C-terminus.

It localises to the nucleus. The enzyme catalyses Thiol-dependent hydrolysis of ester, thioester, amide, peptide and isopeptide bonds formed by the C-terminal Gly of ubiquitin (a 76-residue protein attached to proteins as an intracellular targeting signal).. Negative regulator of DNA damage repair which specifically deubiquitinates monoubiquitinated FANCD2. Also involved in PCNA-mediated translesion synthesis (TLS) by deubiquitinating monoubiquitinated PCNA. Has almost no deubiquitinating activity by itself and requires the interaction with WDR48 to have a high activity. In Homo sapiens (Human), this protein is Ubiquitin carboxyl-terminal hydrolase 1 (USP1).